The sequence spans 600 residues: MSMRTEYCGLVTEHLLGQTVSLCGWVQRRRDHGGVIFIDLRDREGLVQVVCDPDRAEMFATAEGVRNEFCVQVKGLVRNRPEGTVNAGLKSGKIEVLCHELNVLNPSITPPFQLDDDNLSETTRLTHRVLDLRRPQMQHNLRLRYRVAIEARKYLDEQGFIDIETPMLTKSTPEGARDYLVPSRVNAGQFFALPQSPQLFKQLLMVANFDRYYQITKCFRDEDLRADRQPEFTQIDCETSFLGEQEIRDLFEDMIRHIFKTTINVELDAKFPVMPYSEAMARFGSDKPDLRVKLEFTELTDAMKDVDFKVFSTPANAKDGRVAALRVPKGAELSRGDIDGYTEFVRIYGAKGLAWIKVNEKAKGRDGLQSPIVKNLHDASIAAILERTGAEDGDIIFFAADRAKVVNDSLGALRLKIGHSEFGKANGLVEAGWKPLWVVDFPMFEYDDEDARYVAAHHPFTSPKDEHLEYLESDPGRCLAKAYDMVLNGWEIGGGSVRIHREDVQSKVFRALKIGAEEAQAKFGFLLDALQYGAPPHGGIAFGLDRIVTMMAGADSIRDVIAFPKTQRAQDLLTQAPSPVDERQLRELHIRLRQPEQPAS.

Residue E174 participates in L-aspartate binding. The interval 198–201 (QLFK) is aspartate. Position 220 (R220) interacts with L-aspartate. ATP is bound by residues 220 to 222 (RDE) and Q229. L-aspartate is bound at residue H457. E491 is a binding site for ATP. R498 provides a ligand contact to L-aspartate. 543–546 (GLDR) is a binding site for ATP.

It belongs to the class-II aminoacyl-tRNA synthetase family. Type 1 subfamily. Homodimer.

The protein resides in the cytoplasm. The enzyme catalyses tRNA(Asx) + L-aspartate + ATP = L-aspartyl-tRNA(Asx) + AMP + diphosphate. In terms of biological role, aspartyl-tRNA synthetase with relaxed tRNA specificity since it is able to aspartylate not only its cognate tRNA(Asp) but also tRNA(Asn). Reaction proceeds in two steps: L-aspartate is first activated by ATP to form Asp-AMP and then transferred to the acceptor end of tRNA(Asp/Asn). The sequence is that of Aspartate--tRNA(Asp/Asn) ligase from Burkholderia multivorans (strain ATCC 17616 / 249).